The primary structure comprises 223 residues: Ribonuclease 3 (223 aa).

Residues 3–125 (LERLQKKLGY…IIAAIYLDAG (123 aa)) enclose the RNase III domain. E38 provides a ligand contact to Mg(2+). D42 is an active-site residue. 2 residues coordinate Mg(2+): D111 and E114. E114 is a catalytic residue. Positions 152–222 (DPKTRLQEFL…AEQVLAKLTT (71 aa)) constitute a DRBM domain.

Belongs to the ribonuclease III family. Homodimer. Mg(2+) is required as a cofactor.

It localises to the cytoplasm. The enzyme catalyses Endonucleolytic cleavage to 5'-phosphomonoester.. Its function is as follows. Digests double-stranded RNA. Involved in the processing of primary rRNA transcript to yield the immediate precursors to the large and small rRNAs (23S and 16S). Processes some mRNAs, and tRNAs when they are encoded in the rRNA operon. Processes pre-crRNA and tracrRNA of type II CRISPR loci if present in the organism. This is Ribonuclease 3 from Actinobacillus pleuropneumoniae serotype 3 (strain JL03).